The chain runs to 168 residues: Small ribosomal subunit protein uS5 (168 aa).

The 64-residue stretch at 14 to 77 folds into the S5 DRBM domain; sequence FEERVVSINR…EAAKKNLITV (64 aa).

The protein belongs to the universal ribosomal protein uS5 family. Part of the 30S ribosomal subunit. Contacts proteins S4 and S8.

Its function is as follows. With S4 and S12 plays an important role in translational accuracy. Functionally, located at the back of the 30S subunit body where it stabilizes the conformation of the head with respect to the body. The sequence is that of Small ribosomal subunit protein uS5 from Lactococcus lactis subsp. lactis (strain IL1403) (Streptococcus lactis).